The following is a 285-amino-acid chain: uncharacterized protein (285 aa).

Residues 1 to 25 (MANQKKKTLPPQHQNQQPGFEYLMD) are disordered. 45 to 69 (IITGGDSGIGRAVSVLFAKEGANVV) contributes to the NADP(+) binding site. Substrate is bound at residue S177. Y190 serves as the catalytic Proton acceptor.

This sequence belongs to the short-chain dehydrogenases/reductases (SDR) family.

This is an uncharacterized protein from Bacillus subtilis (strain 168).